Reading from the N-terminus, the 290-residue chain is Serine protease 27 (290 aa).

A signal peptide spans 1–22 (MRRPAAVPLLLLLCFGSQRAKA). A propeptide spans 23–34 (ATACGRPRMLNR) (activation peptide). Positions 35-277 (MVGGQDTQEG…HHNWIHRIIP (243 aa)) constitute a Peptidase S1 domain. An N-linked (GlcNAc...) asparagine glycan is attached at N55. A disulfide bridge links C60 with C76. The active-site Charge relay system is the H75. N79 is a glycosylation site (N-linked (GlcNAc...) asparagine). D124 serves as the catalytic Charge relay system. 3 cysteine pairs are disulfide-bonded: C158/C235, C191/C214, and C225/C253. Residue S229 is the Charge relay system of the active site.

It belongs to the peptidase S1 family. N-glycosylated. As to expression, expressed predominantly in the pancreas.

It localises to the secreted. This chain is Serine protease 27 (PRSS27), found in Homo sapiens (Human).